A 140-amino-acid chain; its full sequence is Protein NrdI (140 aa).

It belongs to the NrdI family.

Functionally, probably involved in ribonucleotide reductase function. The polypeptide is Protein NrdI (Ruegeria sp. (strain TM1040) (Silicibacter sp.)).